A 255-amino-acid chain; its full sequence is MFIGIVSLFPEMFRAITDYGVTGRAVKKGLLNIQSWSPRDFAHDRHRTVDDRPYGGGPGMLMMVQPLRDAIHAAKAAAGEGAKVIYLSPQGRKLDQAGVSELATNQKLILVCGRYEGVDERVIQAEIDEEWSIGDYVLSGGELPAMTLIDSVARFIPGVLGHEASAIEDSFADGLLDCPHYTRPEVLEGMEVPPVLLSGNHAEIRRWRLKQSLGRTWLRRPELLENLALTEEQARLLAEFKTEHAQQQHKHDGMA.

Residues glycine 113 and 133–138 (IGDYVL) contribute to the S-adenosyl-L-methionine site.

The protein belongs to the RNA methyltransferase TrmD family. In terms of assembly, homodimer.

The protein resides in the cytoplasm. The enzyme catalyses guanosine(37) in tRNA + S-adenosyl-L-methionine = N(1)-methylguanosine(37) in tRNA + S-adenosyl-L-homocysteine + H(+). Its function is as follows. Specifically methylates guanosine-37 in various tRNAs. The sequence is that of tRNA (guanine-N(1)-)-methyltransferase from Salmonella paratyphi A (strain ATCC 9150 / SARB42).